Here is a 249-residue protein sequence, read N- to C-terminus: Derlin-2 (249 aa).

Residues 1–21 (MAQAVEEWYRQMPIITRSYLT) are Cytoplasmic-facing. Residues 22 to 42 (AAVVTTVGCTLEIISPYHLYL) traverse the membrane as a helical segment. Topologically, residues 43-96 (NPKLVVQHYEIWRLVTNFLYFRKMDLDFLFHMFFLARYCKLLEENSFRGRTADF) are lumenal. Residues 97–117 (FYMLLFGATVLTGIVLIGGMI) form a helical membrane-spanning segment. Topologically, residues 118–122 (PYISE) are cytoplasmic. Residues 123–143 (TFARILFLSNSLTFMMVYVWS) traverse the membrane as a helical segment. The Lumenal portion of the chain corresponds to 144–152 (KHNPFIHMS). The chain crosses the membrane as a helical span at residues 153 to 173 (FLGLFTFTAAYLPWVLLGFSI). Residues 174-249 (LVGSSTWVDL…GAMGADPQAQ (76 aa)) are Cytoplasmic-facing.

It belongs to the derlin family.

The protein resides in the endoplasmic reticulum membrane. In terms of biological role, may be involved in the degradation process of specific misfolded endoplasmic reticulum (ER) luminal proteins. This is Derlin-2 (DER2) from Oryza sativa subsp. japonica (Rice).